The primary structure comprises 507 residues: Glycerol kinase (507 aa).

Residue T14 participates in ADP binding. ATP-binding residues include T14, T15, and S16. A sn-glycerol 3-phosphate-binding site is contributed by T14. ADP is bound at residue R18. Sn-glycerol 3-phosphate is bound by residues R84, E85, Y136, and D246. Residues R84, E85, Y136, D246, and Q247 each contribute to the glycerol site. Positions 268 and 311 each coordinate ADP. The ATP site is built by T268, G311, Q315, and G412. Residues G412 and N416 each contribute to the ADP site.

Belongs to the FGGY kinase family.

The catalysed reaction is glycerol + ATP = sn-glycerol 3-phosphate + ADP + H(+). It participates in polyol metabolism; glycerol degradation via glycerol kinase pathway; sn-glycerol 3-phosphate from glycerol: step 1/1. With respect to regulation, inhibited by fructose 1,6-bisphosphate (FBP). Its function is as follows. Key enzyme in the regulation of glycerol uptake and metabolism. Catalyzes the phosphorylation of glycerol to yield sn-glycerol 3-phosphate. In Vibrio atlanticus (strain LGP32) (Vibrio splendidus (strain Mel32)), this protein is Glycerol kinase.